Reading from the N-terminus, the 164-residue chain is C-phycoerythrin class 1 subunit alpha (164 aa).

Positions 82 and 139 each coordinate (2R,3E)-phycoerythrobilin.

It belongs to the phycobiliprotein family. As to quaternary structure, heterodimer of an alpha and a beta chain. Contains one covalently linked bilin chromophore.

It localises to the cellular thylakoid membrane. Functionally, light-harvesting photosynthetic bile pigment-protein from the phycobiliprotein complex. The sequence is that of C-phycoerythrin class 1 subunit alpha (cpeA) from Synechococcus sp. (strain WH7803).